A 122-amino-acid chain; its full sequence is UPF0231 protein VP2494 (122 aa).

This sequence belongs to the UPF0231 family.

This chain is UPF0231 protein VP2494, found in Vibrio parahaemolyticus serotype O3:K6 (strain RIMD 2210633).